The following is a 376-amino-acid chain: Probable deoxyhypusine synthase (376 aa).

NAD(+) is bound by residues 105-109, 131-133, glutamate 137, and aspartate 238; these read SNLVS and TAG. Position 136–137 (136–137) interacts with spermidine; it reads EE. Residue aspartate 243 coordinates spermidine. Glycine 283 lines the NAD(+) pocket. Residue histidine 288 coordinates spermidine. Residue 308 to 309 coordinates NAD(+); that stretch reads TG. Spermidine is bound by residues 314-316 and 323-329; these read GSD and EAVSWGK. Lysine 329 functions as the Nucleophile in the catalytic mechanism. Residue 342–343 coordinates NAD(+); that stretch reads EA.

The protein belongs to the deoxyhypusine synthase family. It depends on NAD(+) as a cofactor.

The enzyme catalyses [eIF5A protein]-L-lysine + spermidine = [eIF5A protein]-deoxyhypusine + propane-1,3-diamine. It participates in protein modification; eIF5A hypusination. Its function is as follows. Catalyzes the NAD-dependent oxidative cleavage of spermidine and the subsequent transfer of the butylamine moiety of spermidine to the epsilon-amino group of a critical lysine residue of the eIF-5A precursor protein to form the intermediate deoxyhypusine residue. This is the first step of the post-translational modification of that lysine into an unusual amino acid residue named hypusine. Hypusination is unique to mature eIF-5A factor and is essential for its function. This chain is Probable deoxyhypusine synthase (dhps), found in Dictyostelium discoideum (Social amoeba).